The following is a 239-amino-acid chain: MIENQSDNIDNKENDLSDQDNALENVSSAQELTTENNELSSQKTEEINTEELKNSISNNDARLEQLEKEHETLKNQYVRISADFDNFRKRQSRDQDDLKIQLVSKTLTAILPIVDNFERARQQLKPESEEAQSLHRSYQGLYKQLVEVLKQQGVSPMRVVGQQFDPSLHEAVLREPSEKFEEDFIIEELQRGYHLEGKVLRHALVKVSMGPGKQNSQEEVEKDKVEGDIDSEENTSEDV.

2 disordered regions span residues 1 to 54 (MIEN…ELKN) and 208 to 239 (SMGPGKQNSQEEVEKDKVEGDIDSEENTSEDV). Residues 19-42 (QDNALENVSSAQELTTENNELSSQ) are compositionally biased toward polar residues. Positions 43–53 (KTEEINTEELK) are enriched in basic and acidic residues. Positions 228-239 (DIDSEENTSEDV) are enriched in acidic residues.

The protein belongs to the GrpE family. In terms of assembly, homodimer.

The protein resides in the cytoplasm. In terms of biological role, participates actively in the response to hyperosmotic and heat shock by preventing the aggregation of stress-denatured proteins, in association with DnaK and GrpE. It is the nucleotide exchange factor for DnaK and may function as a thermosensor. Unfolded proteins bind initially to DnaJ; upon interaction with the DnaJ-bound protein, DnaK hydrolyzes its bound ATP, resulting in the formation of a stable complex. GrpE releases ADP from DnaK; ATP binding to DnaK triggers the release of the substrate protein, thus completing the reaction cycle. Several rounds of ATP-dependent interactions between DnaJ, DnaK and GrpE are required for fully efficient folding. The polypeptide is Protein GrpE (Prochlorococcus marinus (strain AS9601)).